The sequence spans 872 residues: Metabotropic glutamate receptor 2 (872 aa).

A signal peptide spans 1 to 18; it reads MGSLLALLALLLLWGAVA. Residues 19-567 lie on the Extracellular side of the membrane; the sequence is EGPAKKVLTL…QEYIRWGDAW (549 aa). Cys-50 and Cys-92 are disulfide-bonded. Residues Arg-57, Arg-61, Ser-145, Ala-166, and Thr-168 each coordinate L-glutamate. 2 N-linked (GlcNAc...) asparagine glycosylation sites follow: Asn-203 and Asn-286. 7 cysteine pairs are disulfide-bonded: Cys-234–Cys-518, Cys-355–Cys-362, Cys-400–Cys-407, Cys-500–Cys-519, Cys-504–Cys-522, Cys-525–Cys-537, and Cys-540–Cys-553. An L-glutamate-binding site is contributed by Asp-295. An N-linked (GlcNAc...) asparagine glycan is attached at Asn-338. Lys-377 is a binding site for L-glutamate. A glycan (N-linked (GlcNAc...) asparagine) is linked at Asn-402. The N-linked (GlcNAc...) asparagine glycan is linked to Asn-547. The helical transmembrane segment at 568–590 threads the bilayer; sequence AVGPVTIACLGALATLFVLGVFV. Residues 591 to 604 lie on the Cytoplasmic side of the membrane; sequence RHNATPVVKASGRE. A helical membrane pass occupies residues 605-625; sequence LCYILLGGVFLCYCMTFIFIA. At 626–636 the chain is on the extracellular side; it reads KPSTAVCTLRR. A disulfide bridge connects residues Cys-632 and Cys-721. The chain crosses the membrane as a helical span at residues 637-655; that stretch reads LGLGTAFSVCYSALLTKTN. Topologically, residues 656–679 are cytoplasmic; the sequence is RIARIFGGAREGAQRPRFISPASQ. Residues 677-685 form an important for interaction with HTR2A region; the sequence is ASQVAICLA. Residues 680-700 form a helical membrane-spanning segment; that stretch reads VAICLALISGQLLIVVAWLVV. Topologically, residues 701-725 are extracellular; it reads EAPGTGKETAPERREVVTLRCNHRD. A helical membrane pass occupies residues 726 to 747; that stretch reads ASMLGSLAYNVLLIALCTLYAF. At 748–760 the chain is on the cytoplasmic side; that stretch reads KTRKCPENFNEAK. Residues 761 to 783 form a helical membrane-spanning segment; it reads FIGFTMYTTCIIWLAFLPIFYVT. Topologically, residues 784–793 are extracellular; the sequence is SSDYRVQTTT. A helical transmembrane segment spans residues 794-819; sequence MCVSVSLSGSVVLGCLFAPKLHIILF. Residues 820–872 are Cytoplasmic-facing; it reads QPQKNVVSHRAPTSRFGSAAARASSSLGQGSGSQFVPTVCNGREVVDSTTSSL.

It belongs to the G-protein coupled receptor 3 family. As to quaternary structure, forms heterodimers with GRM3 or GRM4. Interacts with TAMALIN. Interacts with HTR2A. In terms of assembly, (Microbial infection) Interacts with H5N6 virus protein HA. (Microbial infection) Interacts with rabies virus protein G. As to quaternary structure, (Microbial infection) Interacts with SARS-CoV-2 virus spike protein S. In terms of tissue distribution, detected in brain cortex (at protein level). Widely expressed in different regions of the adult brain as well as in fetal brain.

It is found in the cell membrane. Its subcellular location is the synapse. The protein localises to the cell projection. It localises to the dendrite. In terms of biological role, dimeric G protein-coupled receptor which is activated by the excitatory neurotransmitter L-glutamate. Plays critical roles in modulating synaptic transmission and neuronal excitability. Upon activation by glutamate, inhibits presynaptic calcium channels, reducing further glutamate release and dampening excitatory signaling. Mechanistically, ligand binding causes a conformation change that triggers signaling via guanine nucleotide-binding proteins (G proteins) and modulates the activity of down-stream effectors, such as adenylate cyclase. May mediate suppression of neurotransmission or may be involved in synaptogenesis or synaptic stabilization. (Microbial infection) Plays an important role in influenza virus internalization. Its function is as follows. (Microbial infection) Acts as a host entry factor for rabies virus that hijacks the endocytosis of GRM2 to enter cells. Functionally, (Microbial infection) Acts as a host entry factor for SARS-CoV-2 that hijacks the endocytosis of GRM2 to enter cells. The sequence is that of Metabotropic glutamate receptor 2 from Homo sapiens (Human).